Consider the following 576-residue polypeptide: RING finger and SPRY domain-containing protein 1 (576 aa).

Residues 1–16 (MIVFGWAVFLASRSLG) form the signal peptide. At serine 50 the chain carries Phosphoserine. The segment at 50 to 99 (SGTDDSVDTQQQQAENSAVPTADTRSQPRDPVRPPRRGRGPHEPRRKKQN) is disordered. Polar residues predominate over residues 57-68 (DTQQQQAENSAV). Basic residues predominate over residues 83–97 (PPRRGRGPHEPRRKK). Residues 300–483 (LFLKEGRQLT…CEFNFGAKPF (184 aa)) enclose the B30.2/SPRY domain. A glycan (N-linked (GlcNAc...) asparagine) is linked at asparagine 314. The RING-type zinc-finger motif lies at 527 to 562 (CSLCCDEVADTQLKPCGHSDLCMDCALQLETCPLCR).

It is found in the secreted. The sequence is that of RING finger and SPRY domain-containing protein 1 (RSPRY1) from Homo sapiens (Human).